The following is a 77-amino-acid chain: Cell division topological specificity factor (77 aa).

This sequence belongs to the MinE family.

Functionally, prevents the cell division inhibition by proteins MinC and MinD at internal division sites while permitting inhibition at polar sites. This ensures cell division at the proper site by restricting the formation of a division septum at the midpoint of the long axis of the cell. This chain is Cell division topological specificity factor, found in Nautilia profundicola (strain ATCC BAA-1463 / DSM 18972 / AmH).